We begin with the raw amino-acid sequence, 402 residues long: 3-isopropylmalate dehydratase large subunit 2 (402 aa).

The [4Fe-4S] cluster site is built by Cys280, Cys341, and Cys344.

The protein belongs to the aconitase/IPM isomerase family. LeuC type 2 subfamily. Heterodimer of LeuC and LeuD. The cofactor is [4Fe-4S] cluster.

The catalysed reaction is (2R,3S)-3-isopropylmalate = (2S)-2-isopropylmalate. It participates in amino-acid biosynthesis; L-leucine biosynthesis; L-leucine from 3-methyl-2-oxobutanoate: step 2/4. Functionally, catalyzes the isomerization between 2-isopropylmalate and 3-isopropylmalate, via the formation of 2-isopropylmaleate. The protein is 3-isopropylmalate dehydratase large subunit 2 of Methanopyrus kandleri (strain AV19 / DSM 6324 / JCM 9639 / NBRC 100938).